The chain runs to 208 residues: MLDYIPWIGNGYRYGNGYKGVAGAGHSATNGSPAGNTSSTTQSNDVAPTFSNVGVGLKANVQGTLGDSQTTTVGGHQWPTLDPANLQLWTGAEWRNDSKTQNNTTTNENHTKFASATGSGQQQGSTTTTSAGNPDSLKQDKADKSGNSISVQEATSGDNLTNYTNLPPNLTPTSDWPNALSFTNKNNAQRAQLFLRGLLGSIPVLVNN.

Disordered regions lie at residues 29–49 (TNGS…VAPT) and 97–172 (DSKT…NLTP). The segment covering 100–132 (TQNNTTTNENHTKFASATGSGQQQGSTTTTSAG) has biased composition (low complexity). Residues 145–158 (SGNSISVQEATSGD) show a composition bias toward polar residues. The segment covering 159 to 172 (NLTNYTNLPPNLTP) has biased composition (low complexity).

Belongs to the adhesin P1 family.

This chain is Putative adhesin P1-like protein MPN_468, found in Mycoplasma pneumoniae (strain ATCC 29342 / M129 / Subtype 1) (Mycoplasmoides pneumoniae).